A 177-amino-acid polypeptide reads, in one-letter code: Bifunctional protein PyrR (177 aa).

Residues 99 to 111 (VVLVDDVIYKGRT) carry the PRPP-binding motif.

The protein belongs to the purine/pyrimidine phosphoribosyltransferase family. PyrR subfamily.

The catalysed reaction is UMP + diphosphate = 5-phospho-alpha-D-ribose 1-diphosphate + uracil. In terms of biological role, regulates the transcription of the pyrimidine nucleotide (pyr) operon in response to exogenous pyrimidines. Also displays a weak uracil phosphoribosyltransferase activity which is not physiologically significant. In Gloeothece citriformis (strain PCC 7424) (Cyanothece sp. (strain PCC 7424)), this protein is Bifunctional protein PyrR.